The chain runs to 100 residues: Small ribosomal subunit protein uS14c (100 aa).

It belongs to the universal ribosomal protein uS14 family. In terms of assembly, part of the 30S ribosomal subunit.

It localises to the plastid. It is found in the chloroplast. Binds 16S rRNA, required for the assembly of 30S particles. The polypeptide is Small ribosomal subunit protein uS14c (Ostreococcus tauri).